We begin with the raw amino-acid sequence, 337 residues long: Eukaryotic translation initiation factor 3 subunit H (337 aa).

The region spanning 25–158 (VQIEGLAVLK…LKALKLSDSF (134 aa)) is the MPN domain. S178 is modified (phosphoserine; by ATPK1). Residues 267–278 (RRTENMARKSAG) show a composition bias toward basic and acidic residues. A disordered region spans residues 267–290 (RRTENMARKSAGEEPLPEEDPSNP).

Belongs to the eIF-3 subunit H family. In terms of assembly, component of the eukaryotic translation initiation factor 3 (eIF-3) complex. Interacts directly with TIF3A1, TIF3B1, TIF3C1, TIF3E1 and TIF3F1. Associates with the CSN (COP9 signalosome) complex. Binds to CSN1, CSN7 and CSN8. Interacts with ATPK1. In response to auxin (NAA), phosphorylated at Ser-178 by ATPK1 and binds to polysomes via TOR signaling. This phosphorylation is repressed by Torin-1. In terms of tissue distribution, mostly expressed in roots and flowers, and, to a lower extent, in leaves, stems and siliques.

Its subcellular location is the cytoplasm. Its function is as follows. Component of the eukaryotic translation initiation factor 3 (eIF-3) complex, which is involved in protein synthesis of a specialized repertoire of mRNAs and, together with other initiation factors, stimulates binding of mRNA and methionyl-tRNAi to the 40S ribosome. The eIF-3 complex specifically targets and initiates translation of a subset of mRNAs involved in cell proliferation (Potential). Regulates translation initiation of specific 5' mRNAs harboring multiple upstream open reading frames (uORFs) in their 5' leader sequence (e.g. BETA-OHASE 2 and LHY). The chain is Eukaryotic translation initiation factor 3 subunit H (TIF3H1) from Arabidopsis thaliana (Mouse-ear cress).